The following is a 228-amino-acid chain: UPF0758 protein str1465 (228 aa).

The MPN domain occupies 103-225 (QIMSSQQVAR…YYSFREERED (123 aa)). Zn(2+)-binding residues include H174, H176, and D187. The JAMM motif signature appears at 174–187 (HNHPSGEAYPSRND).

This sequence belongs to the UPF0758 family.

This is UPF0758 protein str1465 from Streptococcus thermophilus (strain CNRZ 1066).